A 311-amino-acid chain; its full sequence is L-lactate dehydrogenase (311 aa).

NAD(+)-binding positions include V12, D33, K38, Y63, and 77 to 78 (GA). Substrate-binding positions include Q80, R86, and 118-121 (NPVD). NAD(+)-binding positions include 116 to 118 (VTN) and S141. 146–149 (DSAR) is a substrate binding site. R151 and H166 together coordinate beta-D-fructose 1,6-bisphosphate. Catalysis depends on H173, which acts as the Proton acceptor. Y219 carries the phosphotyrosine modification. T228 provides a ligand contact to substrate.

Belongs to the LDH/MDH superfamily. LDH family. Homotetramer.

The protein resides in the cytoplasm. It carries out the reaction (S)-lactate + NAD(+) = pyruvate + NADH + H(+). Its pathway is fermentation; pyruvate fermentation to lactate; (S)-lactate from pyruvate: step 1/1. Allosterically activated by fructose 1,6-bisphosphate (FBP). Catalyzes the conversion of lactate to pyruvate. The polypeptide is L-lactate dehydrogenase (Thermoanaerobacter pseudethanolicus (strain ATCC 33223 / 39E) (Clostridium thermohydrosulfuricum)).